We begin with the raw amino-acid sequence, 87 residues long: Exodeoxyribonuclease 7 small subunit (87 aa).

This sequence belongs to the XseB family. In terms of assembly, heterooligomer composed of large and small subunits.

It is found in the cytoplasm. It carries out the reaction Exonucleolytic cleavage in either 5'- to 3'- or 3'- to 5'-direction to yield nucleoside 5'-phosphates.. Its function is as follows. Bidirectionally degrades single-stranded DNA into large acid-insoluble oligonucleotides, which are then degraded further into small acid-soluble oligonucleotides. The protein is Exodeoxyribonuclease 7 small subunit of Serratia proteamaculans (strain 568).